We begin with the raw amino-acid sequence, 450 residues long: MKATKTTYQKDHMGLTPSQIVNELNRFIVGQEKAKKAVAIALRNRCRRKRVEGNLRNEIVPKNILMIGSTGVGKTEIARRLAKLTYSPFYKIEATKFTEVGYVGRDVESIIRDLVEIAVNTEKTLAKTEVDINAREQAIERILDSLVGKTSSSETREKFKEKILNGELDDTEIEISVADTTPVGGGSFEIPGMPGASMGVLNLGDVIGRALGGSKTKTKKMLVKDAMAIIIPEESEKLIDQEKIIQQAINLAENDGIVFIDEIDKIASTGSSGAKNAEISREGVQRDLLPLIEGTTVNTKYGPVKTDHILFIASGAFHIAKPSDLLPELQGRLPIRVELNSLTKDDMIKILLEPETSLIKQYSALIGTEDVYIAFTDSAIEKIADYAITVNLEVEDIGARRLHTILENLLEDISFEASEMKGRKITIDDKFVENQLSKIITNLDLAKFVL.

ATP-binding positions include Val-29, 71-76 (GVGKTE), Asp-261, Glu-328, and Arg-400.

The protein belongs to the ClpX chaperone family. HslU subfamily. In terms of assembly, a double ring-shaped homohexamer of HslV is capped on each side by a ring-shaped HslU homohexamer. The assembly of the HslU/HslV complex is dependent on binding of ATP.

The protein resides in the cytoplasm. Its function is as follows. ATPase subunit of a proteasome-like degradation complex; this subunit has chaperone activity. The binding of ATP and its subsequent hydrolysis by HslU are essential for unfolding of protein substrates subsequently hydrolyzed by HslV. HslU recognizes the N-terminal part of its protein substrates and unfolds these before they are guided to HslV for hydrolysis. This is ATP-dependent protease ATPase subunit HslU from Rickettsia akari (strain Hartford).